A 130-amino-acid polypeptide reads, in one-letter code: Small ribosomal subunit protein uS9 (130 aa).

It belongs to the universal ribosomal protein uS9 family.

The protein is Small ribosomal subunit protein uS9 of Vibrio vulnificus (strain CMCP6).